Here is a 404-residue protein sequence, read N- to C-terminus: Probable pectate lyase 18 (404 aa).

Positions 1–20 are cleaved as a signal peptide; the sequence is MSTLFFTFSLLLLAPLLVIS. N37 carries N-linked (GlcNAc...) asparagine glycosylation. The cysteines at positions 159 and 178 are disulfide-linked. N191 carries N-linked (GlcNAc...) asparagine glycosylation. Positions 200, 202, 224, and 228 each coordinate Ca(2+). Residue R280 is part of the active site.

It belongs to the polysaccharide lyase 1 family. The cofactor is Ca(2+). Predominantly found in the pistil where it is found in the outer five layers of the strands of transmitting tissue within the upper two-thirds of the style. Found at much lower levels in the anthers and vegetative organs.

The protein resides in the secreted. The catalysed reaction is Eliminative cleavage of (1-&gt;4)-alpha-D-galacturonan to give oligosaccharides with 4-deoxy-alpha-D-galact-4-enuronosyl groups at their non-reducing ends.. The protein operates within glycan metabolism; pectin degradation; 2-dehydro-3-deoxy-D-gluconate from pectin: step 2/5. Its function is as follows. May have a role in the development of the transmitting tissue of the style and/or in the events related to pollination such as some aspect in the facilitation of compatible pollen tube growth. In Solanum lycopersicum (Tomato), this protein is Probable pectate lyase 18.